Reading from the N-terminus, the 420-residue chain is Vasopressin V1a receptor (420 aa).

The disordered stretch occupies residues 1–20; that stretch reads MSFPRGSYDPAASNSSPWWP. Residues 1-54 lie on the Extracellular side of the membrane; it reads MSFPRGSYDPAASNSSPWWPLSAEDANSSWEAAGHQKGSDPSGDVRNEELAKLE. Asn27 carries N-linked (GlcNAc...) asparagine glycosylation. The chain crosses the membrane as a helical span at residues 55–75; that stretch reads IAVLAVIFVVAVLGNSSVLLA. At 76–92 the chain is on the cytoplasmic side; it reads LHRTPRKTSRMHLFIRH. A helical membrane pass occupies residues 93–113; the sequence is LSLADLAVAFFQVLPQLCWDI. At 114–125 the chain is on the extracellular side; the sequence is TYRFRGPDWLCR. A disulfide bond links Cys124 and Cys205. The helical transmembrane segment at 126–146 threads the bilayer; sequence VVKHLQVFAMFASAYMLVVMT. At 147 to 168 the chain is on the cytoplasmic side; sequence ADRYIAVCHPLKTLQQPTRRSR. The chain crosses the membrane as a helical span at residues 169–189; the sequence is LMIAASWVLSFLLSTPQYFIF. The Extracellular portion of the chain corresponds to 190 to 225; it reads SMIEIEVNNGTKTQDCWATFIQPWGTRAYVTWMTSG. A glycan (N-linked (GlcNAc...) asparagine) is linked at Asn198. Residues 226–246 traverse the membrane as a helical segment; the sequence is VFVVPVVILGTCYGFICYHIW. The Cytoplasmic segment spans residues 247–294; sequence RNVRGKTASRQSKGSGEDVAPFHKGLLVTPCVSSVKTISRAKIRTVKM. Residues 295-315 traverse the membrane as a helical segment; the sequence is TFVIVTAYILCWAPFFIVQMW. The Extracellular segment spans residues 316 to 331; that stretch reads SVWDDNFIWTDSENPS. Residues 332-352 form a helical membrane-spanning segment; it reads ITITALLASLNSCCNPWIYMF. Residues 353-420 lie on the Cytoplasmic side of the membrane; sequence FSGHLLQDCV…RSIRFIPVST (68 aa). 2 S-palmitoyl cysteine lipidation sites follow: Cys367 and Cys368. Positions 379 to 411 are disordered; sequence DSDNMSRRHTSYSNNRSPTNSTGTWKDSPKSSR. Residues 389–403 are compositionally biased toward polar residues; that stretch reads SYSNNRSPTNSTGTW. Ser406 is modified (phosphoserine).

It belongs to the G-protein coupled receptor 1 family. Vasopressin/oxytocin receptor subfamily.

The protein resides in the cell membrane. Receptor for arginine vasopressin. The activity of this receptor is mediated by G proteins which activate a phosphatidyl-inositol-calcium second messenger system. Involved in social memory formation. The chain is Vasopressin V1a receptor (Avpr1a) from Microtus ochrogaster (Prairie vole).